The chain runs to 77 residues: Exodeoxyribonuclease 7 small subunit (77 aa).

This sequence belongs to the XseB family. In terms of assembly, heterooligomer composed of large and small subunits.

The protein localises to the cytoplasm. It carries out the reaction Exonucleolytic cleavage in either 5'- to 3'- or 3'- to 5'-direction to yield nucleoside 5'-phosphates.. Functionally, bidirectionally degrades single-stranded DNA into large acid-insoluble oligonucleotides, which are then degraded further into small acid-soluble oligonucleotides. In Trichlorobacter lovleyi (strain ATCC BAA-1151 / DSM 17278 / SZ) (Geobacter lovleyi), this protein is Exodeoxyribonuclease 7 small subunit.